The chain runs to 470 residues: MENFWSLCLGRFEEELSAQQFNTWIKPLRFEAREGTLRLLAPNRFVQQWVKDRFLQKISALAEEVLSTPVQIELALYDASEKSPITLAKPKPAEAPGAAAKIEAEISKVTKTVSPAKPASAAPKKPKTLTETSGLNPAFRFDNFVTGKANQLARAAAIQVAENPGTAYNPLFIYGGVGLGKTHVLQAIGNHLKSQRPDAKIRYLHAERYVSDVVKAYEHKAFDEFKRQYHSLDLLLIDDIQFFAKKSRTQEEFFYAFNSLIEAKKQIIITCDTYPKEIADVDERLRTRFSWGLTVAVEPPELEMRVAILLKKAEAARVTLDEDVAFFIAKQVRSSVRELEGALNRIIAMANFTGHAIDVSLAKEALKDLIAVRGRQITIENIQKTVADYYKIKVAEMYSKKRSRNFARPRQIAMTLARELTNHSFPEIGEAFGGRHHTTVMHACDEIEQLRQNDQNVARDIAVLIQVIRD.

The interval methionine 1 to threonine 68 is domain I, interacts with DnaA modulators. A domain II region spans residues threonine 68 to serine 133. Residues glycine 134–alanine 350 form a domain III, AAA+ region region. Residues glycine 178, glycine 180, lysine 181, and threonine 182 each contribute to the ATP site. Positions asparagine 351 to aspartate 470 are domain IV, binds dsDNA.

It belongs to the DnaA family. As to quaternary structure, oligomerizes as a right-handed, spiral filament on DNA at oriC.

Its subcellular location is the cytoplasm. Functionally, plays an essential role in the initiation and regulation of chromosomal replication. ATP-DnaA binds to the origin of replication (oriC) to initiate formation of the DNA replication initiation complex once per cell cycle. Binds the DnaA box (a 9 base pair repeat at the origin) and separates the double-stranded (ds)DNA. Forms a right-handed helical filament on oriC DNA; dsDNA binds to the exterior of the filament while single-stranded (ss)DNA is stabiized in the filament's interior. The ATP-DnaA-oriC complex binds and stabilizes one strand of the AT-rich DNA unwinding element (DUE), permitting loading of DNA polymerase. After initiation quickly degrades to an ADP-DnaA complex that is not apt for DNA replication. Binds acidic phospholipids. In Methylobacillus flagellatus (strain ATCC 51484 / DSM 6875 / VKM B-1610 / KT), this protein is Chromosomal replication initiator protein DnaA.